A 315-amino-acid chain; its full sequence is Transaldolase (315 aa).

K131 serves as the catalytic Schiff-base intermediate with substrate.

Belongs to the transaldolase family. Type 1 subfamily. In terms of assembly, homodimer.

It is found in the cytoplasm. It catalyses the reaction D-sedoheptulose 7-phosphate + D-glyceraldehyde 3-phosphate = D-erythrose 4-phosphate + beta-D-fructose 6-phosphate. It participates in carbohydrate degradation; pentose phosphate pathway; D-glyceraldehyde 3-phosphate and beta-D-fructose 6-phosphate from D-ribose 5-phosphate and D-xylulose 5-phosphate (non-oxidative stage): step 2/3. Transaldolase is important for the balance of metabolites in the pentose-phosphate pathway. In Actinobacillus pleuropneumoniae serotype 3 (strain JL03), this protein is Transaldolase.